The sequence spans 333 residues: Alpha-N-acetylgalactosaminide alpha-2,6-sialyltransferase 6 (333 aa).

Over residues 1–12 (MACSRPPSQCEP) the composition is skewed to polar residues. Positions 1–26 (MACSRPPSQCEPTSLPPGPPAGRRHL) are disordered. At 1–43 (MACSRPPSQCEPTSLPPGPPAGRRHLPLSRRRREMSSNKEQRS) the chain is on the cytoplasmic side. A helical; Signal-anchor for type II membrane protein membrane pass occupies residues 44-64 (AVFVILFALITILILYSSNSA). Residues 65 to 333 (NEVFHYGSLR…GITFSHPSWT (269 aa)) are Lumenal-facing. Residue N98 is glycosylated (N-linked (GlcNAc...) asparagine). Cysteines 108 and 256 form a disulfide.

This sequence belongs to the glycosyltransferase 29 family. Expressed in kidney, in proximal tubule epithelial cells. Expressed in colon cell lines.

Its subcellular location is the golgi apparatus membrane. It carries out the reaction a ganglioside GM1b (d18:1(4E)) + CMP-N-acetyl-beta-neuraminate = a ganglioside GD1alpha (d18:1(4E)) + CMP + H(+). It catalyses the reaction N-acetyl-alpha-neuraminosyl-(2-&gt;3)-beta-D-galactosyl-(1-&gt;3)-N-acetyl-beta-D-glucosaminyl-(1-&gt;3)-beta-D-galactosyl-(1-&gt;4)-beta-D-glucosyl-(1&lt;-&gt;1')-N-acyl-sphing-4-enine + CMP-N-acetyl-beta-neuraminate = N-acetyl-alpha-neuraminosyl-(2-&gt;3)-beta-D-galactosyl-(1-&gt;3)-[N-acetyl-alpha-neuraminosyl-(2-&gt;6)]-N-acetyl-beta-D-glucosaminyl-(1-&gt;3)-beta-D-galactosyl-(1-&gt;4)-beta-D-glucosyl-(1&lt;-&gt;1')-N-acyl-sphing-4-enine + CMP + H(+). The enzyme catalyses a globoside MSGG + CMP-N-acetyl-beta-neuraminate = a globoside DSGG + CMP + H(+). The catalysed reaction is a ganglioside GD1a (d18:1(4E)) + CMP-N-acetyl-beta-neuraminate = a ganglioside GT1aalpha (d18:1(4E)) + CMP + H(+). It carries out the reaction a ganglioside GT1b (d18:1(4E)) + CMP-N-acetyl-beta-neuraminate = a ganglioside GQ1balpha (d18:1(4E)) + CMP + H(+). It catalyses the reaction 3-O-[alpha-Neu5Ac-(2-&gt;3)-beta-D-Gal-(1-&gt;3)-alpha-D-GalNAc]-L-Ser-[protein] + CMP-N-acetyl-beta-neuraminate = a 3-O-{alpha-Neu5Ac-(2-&gt;3)-beta-D-Gal-(1-&gt;3)-[alpha-Neu5Ac-(2-&gt;6)]-alpha-D-GalNAc}-L-seryl-[protein] + CMP + H(+). The enzyme catalyses 3-O-[alpha-Neu5Ac-(2-&gt;3)-beta-D-Gal-(1-&gt;3)-alpha-D-GalNAc]-L-Thr-[protein] + CMP-N-acetyl-beta-neuraminate = a 3-O-{alpha-Neu5Ac-(2-&gt;3)-beta-D-Gal-(1-&gt;3)-[alpha-Neu5Ac-(2-&gt;6)]-alpha-D-GalNAc}-L-threonyl-[protein] + CMP + H(+). Its function is as follows. Transfers the sialyl group (N-acetyl-alpha-neuraminyl or NeuAc) from CMP-NeuAc onto glycoproteins and glycolipids, forming an alpha-2,6-linkage. Produces branched type disialyl structures by transfer of a sialyl group onto the GalNAc or GlcNAc residue inside backbone core chains having a terminal sialic acid with an alpha-2,3-linkage on Gal. ST6GalNAcVI prefers glycolipids to glycoproteins, predominantly catalyzing the biosynthesis of ganglioside GD1alpha from GM1b. Besides GMb1, MSGG and other glycolipids, it shows activity towards sialyl Lc4Cer generating disialyl Lc4Cer, which can lead to the synthesis of disialyl Lewis a (Le(a)), suggested to be a cancer-associated antigen. Also has activity toward GD1a and GT1b, and can generate DSGG (disialylgalactosylgloboside) from MSGG (monosialylgalactosylgloboside). The polypeptide is Alpha-N-acetylgalactosaminide alpha-2,6-sialyltransferase 6 (ST6GALNAC6) (Homo sapiens (Human)).